A 478-amino-acid polypeptide reads, in one-letter code: DNA gyrase subunit B (478 aa).

One can recognise a Toprim domain in the interval 319–438 (CELYLVEGDS…QGYLYVALPP (120 aa)). Residues E325, D403, and D405 each contribute to the Mg(2+) site.

This sequence belongs to the type II topoisomerase GyrB family. As to quaternary structure, heterotetramer, composed of two GyrA and two GyrB chains. In the heterotetramer, GyrA contains the active site tyrosine that forms a transient covalent intermediate with DNA, while GyrB binds cofactors and catalyzes ATP hydrolysis. Mg(2+) serves as cofactor. The cofactor is Mn(2+). Requires Ca(2+) as cofactor.

The protein resides in the cytoplasm. The catalysed reaction is ATP-dependent breakage, passage and rejoining of double-stranded DNA.. Its function is as follows. A type II topoisomerase that negatively supercoils closed circular double-stranded (ds) DNA in an ATP-dependent manner to modulate DNA topology and maintain chromosomes in an underwound state. Negative supercoiling favors strand separation, and DNA replication, transcription, recombination and repair, all of which involve strand separation. Also able to catalyze the interconversion of other topological isomers of dsDNA rings, including catenanes and knotted rings. Type II topoisomerases break and join 2 DNA strands simultaneously in an ATP-dependent manner. This Eisenibacter elegans (Flexibacter elegans) protein is DNA gyrase subunit B (gyrB).